The chain runs to 195 residues: Imidazoleglycerol-phosphate dehydratase (195 aa).

This sequence belongs to the imidazoleglycerol-phosphate dehydratase family.

It localises to the cytoplasm. The catalysed reaction is D-erythro-1-(imidazol-4-yl)glycerol 3-phosphate = 3-(imidazol-4-yl)-2-oxopropyl phosphate + H2O. Its pathway is amino-acid biosynthesis; L-histidine biosynthesis; L-histidine from 5-phospho-alpha-D-ribose 1-diphosphate: step 6/9. This chain is Imidazoleglycerol-phosphate dehydratase, found in Burkholderia vietnamiensis (strain G4 / LMG 22486) (Burkholderia cepacia (strain R1808)).